The following is a 382-amino-acid chain: Mannitol-1-phosphate 5-dehydrogenase (382 aa).

3 to 14 (ALHFGAGNIGRG) contributes to the NAD(+) binding site.

The protein belongs to the mannitol dehydrogenase family.

It catalyses the reaction D-mannitol 1-phosphate + NAD(+) = beta-D-fructose 6-phosphate + NADH + H(+). This is Mannitol-1-phosphate 5-dehydrogenase from Tolumonas auensis (strain DSM 9187 / NBRC 110442 / TA 4).